We begin with the raw amino-acid sequence, 309 residues long: Ornithine carbamoyltransferase (309 aa).

Residues 51–54 (STRT), Q78, R102, and 129–132 (HPVQ) each bind carbamoyl phosphate. L-ornithine contacts are provided by residues N159, D223, and 227-228 (SM). Carbamoyl phosphate contacts are provided by residues 263 to 264 (CL) and R291.

Belongs to the aspartate/ornithine carbamoyltransferase superfamily. OTCase family.

It is found in the cytoplasm. It carries out the reaction carbamoyl phosphate + L-ornithine = L-citrulline + phosphate + H(+). Its pathway is amino-acid biosynthesis; L-arginine biosynthesis; L-arginine from L-ornithine and carbamoyl phosphate: step 1/3. Functionally, reversibly catalyzes the transfer of the carbamoyl group from carbamoyl phosphate (CP) to the N(epsilon) atom of ornithine (ORN) to produce L-citrulline. The chain is Ornithine carbamoyltransferase from Nitratiruptor sp. (strain SB155-2).